A 101-amino-acid polypeptide reads, in one-letter code: NADH-quinone oxidoreductase subunit K (101 aa).

The next 3 membrane-spanning stretches (helical) occupy residues 4-24 (LSHY…GIFL), 30-50 (IVLL…FIAF), and 61-81 (VFVF…LAIL).

This sequence belongs to the complex I subunit 4L family. In terms of assembly, NDH-1 is composed of 14 different subunits. Subunits NuoA, H, J, K, L, M, N constitute the membrane sector of the complex.

The protein resides in the cell inner membrane. The enzyme catalyses a quinone + NADH + 5 H(+)(in) = a quinol + NAD(+) + 4 H(+)(out). Functionally, NDH-1 shuttles electrons from NADH, via FMN and iron-sulfur (Fe-S) centers, to quinones in the respiratory chain. The immediate electron acceptor for the enzyme in this species is believed to be ubiquinone. Couples the redox reaction to proton translocation (for every two electrons transferred, four hydrogen ions are translocated across the cytoplasmic membrane), and thus conserves the redox energy in a proton gradient. The polypeptide is NADH-quinone oxidoreductase subunit K (Azoarcus sp. (strain BH72)).